The sequence spans 291 residues: Capsid protein (291 aa).

Polar residues predominate over residues 1-14 (MQSRPAQESGSASE). The disordered stretch occupies residues 1–36 (MQSRPAQESGSASETPARGRPTPSDAPRDEPTNYNN).

Belongs to the potexviruses coat protein family.

The protein resides in the virion. Functionally, required for genome encapsidation. Forms ribonucleoprotein complexes along with TGB1 helicase and viral RNA. The protein is Capsid protein of Lily symptomless virus (LSV).